Reading from the N-terminus, the 145-residue chain is Transcriptional regulator SlyA (145 aa).

Residues E2–K135 enclose the HTH marR-type domain. The H-T-H motif DNA-binding region spans Q49–E72.

It belongs to the SlyA family. In terms of assembly, homodimer.

Transcription regulator that can specifically activate or repress expression of target genes. The protein is Transcriptional regulator SlyA of Pectobacterium carotovorum subsp. carotovorum (strain PC1).